A 447-amino-acid chain; its full sequence is N-succinylarginine dihydrolase (447 aa).

Residues 19-28, Asn110, and 137-138 each bind substrate; these read AGLSFGNEAS and HR. Glu174 is a catalytic residue. Arg214 serves as a coordination point for substrate. Residue His250 is part of the active site. Residues Asp252 and Asn365 each contribute to the substrate site. Cys371 (nucleophile) is an active-site residue.

The protein belongs to the succinylarginine dihydrolase family. As to quaternary structure, homodimer.

It carries out the reaction N(2)-succinyl-L-arginine + 2 H2O + 2 H(+) = N(2)-succinyl-L-ornithine + 2 NH4(+) + CO2. Its pathway is amino-acid degradation; L-arginine degradation via AST pathway; L-glutamate and succinate from L-arginine: step 2/5. In terms of biological role, catalyzes the hydrolysis of N(2)-succinylarginine into N(2)-succinylornithine, ammonia and CO(2). The protein is N-succinylarginine dihydrolase of Acinetobacter baumannii (strain ATCC 17978 / DSM 105126 / CIP 53.77 / LMG 1025 / NCDC KC755 / 5377).